The sequence spans 462 residues: Probable threonine/serine transporter YbxG (462 aa).

12 helical membrane passes run 17–37 (MIAL…STIS), 38–58 (WTGP…FFIM), 89–109 (ITAW…IIAV), 121–141 (PAWI…LISV), 154–174 (IKIV…FFGF), 190–210 (GGFF…VIAA), 238–258 (IIWR…TVYP), 276–296 (IGIT…AMSG), 331–351 (LYGT…NYIA), 355–375 (IFVY…FIIL), 398–418 (FAPF…VGMW), and 427–447 (LIVG…FGIG).

This sequence belongs to the amino acid-polyamine-organocation (APC) superfamily.

The protein resides in the cell membrane. Its function is as follows. Probable threonine transporter. Is also active as a minor serine permease. The polypeptide is Probable threonine/serine transporter YbxG (ybxG) (Bacillus subtilis (strain 168)).